Here is a 342-residue protein sequence, read N- to C-terminus: Methionine import ATP-binding protein MetN 3 (342 aa).

The region spanning 2–241 (ISLKGISKTF…PKEQMTKEFV (240 aa)) is the ABC transporter domain. Residue 38–45 (GYSGAGKS) participates in ATP binding.

This sequence belongs to the ABC transporter superfamily. Methionine importer (TC 3.A.1.24) family. As to quaternary structure, the complex is composed of two ATP-binding proteins (MetN), two transmembrane proteins (MetI) and a solute-binding protein (MetQ).

The protein localises to the cell membrane. The catalysed reaction is L-methionine(out) + ATP + H2O = L-methionine(in) + ADP + phosphate + H(+). The enzyme catalyses D-methionine(out) + ATP + H2O = D-methionine(in) + ADP + phosphate + H(+). Functionally, part of the ABC transporter complex MetNIQ involved in methionine import. Responsible for energy coupling to the transport system. This chain is Methionine import ATP-binding protein MetN 3, found in Shouchella clausii (strain KSM-K16) (Alkalihalobacillus clausii).